The following is a 315-amino-acid chain: Protein translocase subunit SecF (315 aa).

Helical transmembrane passes span 12–32, 136–156, 166–186, 188–208, 247–267, and 271–291; these read AWIVSSLLVLISIFAMAISWA, ALFRSGVLALVISLLGIIIYL, VFAIIALLYDALITMGAFAIF, LVGGVEVDSLFLVALLTIIGF, SINTSLTTSLPLVAIFLFGGD, and FFALALIIGFASGVYSSIFMA.

The protein belongs to the SecD/SecF family. SecF subfamily. Forms a complex with SecD. Part of the essential Sec protein translocation apparatus which comprises SecA, SecYEG and auxiliary proteins SecDF. Other proteins may also be involved.

It is found in the cell inner membrane. Part of the Sec protein translocase complex. Interacts with the SecYEG preprotein conducting channel. SecDF uses the proton motive force (PMF) to complete protein translocation after the ATP-dependent function of SecA. In terms of biological role, probably participates in protein translocation into and across both the cytoplasmic and thylakoid membranes in cyanobacterial cells. The chain is Protein translocase subunit SecF from Synechocystis sp. (strain ATCC 27184 / PCC 6803 / Kazusa).